The chain runs to 325 residues: Hydroxymethylglutaryl-CoA lyase, mitochondrial (325 aa).

The N-terminal 27 residues, M1–G27, are a transit peptide targeting the mitochondrion. The Pyruvate carboxyltransferase domain occupies V33–L300. R41 is a substrate binding site. D42 provides a ligand contact to a divalent metal cation. Residue K48 is modified to N6-acetyllysine; alternate. K48 carries the N6-succinyllysine; alternate modification. Residue K111 is modified to N6-acetyllysine. N6-acetyllysine; alternate occurs at positions 137 and 179. 2 positions are modified to N6-succinyllysine; alternate: K137 and K179. Positions 233 and 235 each coordinate a divalent metal cation. Residue C266 is part of the active site. N275 is an a divalent metal cation binding site. The Microbody targeting signal motif lies at C323–L325. An N6-acetyllysine modification is found at K324.

This sequence belongs to the HMG-CoA lyase family. In terms of assembly, homodimer; disulfide-linked. Can also form homotetramers. As to expression, in suckling rat, highest levels in liver and in intestine. Lower levels in heart, kidney and cerebellum. Weak expression in brain cortex, medulla and midbrain. Levels decrease slightly during weaning.

It is found in the mitochondrion matrix. Its subcellular location is the peroxisome. The enzyme catalyses (3S)-3-hydroxy-3-methylglutaryl-CoA = acetoacetate + acetyl-CoA. The protein operates within metabolic intermediate metabolism; (S)-3-hydroxy-3-methylglutaryl-CoA degradation; acetoacetate from (S)-3-hydroxy-3-methylglutaryl-CoA: step 1/1. Its function is as follows. Mitochondrial 3-hydroxy-3-methylglutaryl-CoA lyase that catalyzes a cation-dependent cleavage of (S)-3-hydroxy-3-methylglutaryl-CoA into acetyl-CoA and acetoacetate, a key step in ketogenesis. Terminal step in leucine catabolism. Ketone bodies (beta-hydroxybutyrate, acetoacetate and acetone) are essential as an alternative source of energy to glucose, as lipid precursors and as regulators of metabolism. The chain is Hydroxymethylglutaryl-CoA lyase, mitochondrial (Hmgcl) from Rattus norvegicus (Rat).